The chain runs to 410 residues: Peptidase T (410 aa).

The disordered stretch occupies residues 11–30; sequence RYAEIDTQSDPDSESTPSTE. Residue His-78 coordinates Zn(2+). Residue Asp-80 is part of the active site. Asp-140 is a binding site for Zn(2+). Glu-174 acts as the Proton acceptor in catalysis. Residues Glu-175, Asp-197, and His-379 each coordinate Zn(2+).

This sequence belongs to the peptidase M20B family. Requires Zn(2+) as cofactor.

It localises to the cytoplasm. It carries out the reaction Release of the N-terminal residue from a tripeptide.. Functionally, cleaves the N-terminal amino acid of tripeptides. The polypeptide is Peptidase T (Staphylococcus carnosus (strain TM300)).